Reading from the N-terminus, the 287-residue chain is MSKYLVPVCASISLVAVFGALVAMHSIVVDIDTMREEIVTGVHDMKVMSDDAWNRMIGFTKPSLDSESRSAAFASVFRNKRSAYPSQCNCDANSQGCPPGPPGPPGLPGGRGDQGPSGDKGRDGASGVSLAVTHHLPGGCIQCPQGPPGETGPDGDIGEPGFPGASGSAGQCGEDGAPGEAGITGEQGPQGEPGTEGSEGPTGQDGTIGGPGLPGQPGTPGWPGSQGEPGKNGDSGVDGEQGPQGPQGPDGQPGRDADNGQPGLPGKDGSIGPDANYCPCPARAKKH.

An N-terminal signal peptide occupies residues 1–19; it reads MSKYLVPVCASISLVAVFG. Positions 95 to 287 are disordered; the sequence is QGCPPGPPGP…CPCPARAKKH (193 aa). Positions 98–107 are enriched in pro residues; that stretch reads PPGPPGPPGL. 2 Collagen-like domains span residues 145–200 and 215–273; these read QGPP…GSEG and GQPG…SIGP. Residues 184 to 205 are compositionally biased toward low complexity; it reads TGEQGPQGEPGTEGSEGPTGQD. The span at 206–215 shows a compositional bias: gly residues; it reads GTIGGPGLPG. Residues 238–252 are compositionally biased toward low complexity; the sequence is DGEQGPQGPQGPDGQ.

The protein belongs to the cuticular collagen family. As to quaternary structure, collagen polypeptide chains are complexed within the cuticle by disulfide bonds and other types of covalent cross-links.

The protein resides in the nucleus. Functionally, probable cuticular collagen-like protein. Nematode cuticles are composed largely of collagen-like proteins. The cuticle functions both as an exoskeleton and as a barrier to protect the worm from its environment. Acts downstream of the Wnt signaling pathway, perhaps in the formation of the adult cuticle. The sequence is that of Cuticle collagen 38 from Caenorhabditis elegans.